The following is a 436-amino-acid chain: Trigger factor (436 aa).

The PPIase FKBP-type domain maps to 163 to 248 (GDRVTVDFEG…VKKIEAAHLP (86 aa)).

This sequence belongs to the FKBP-type PPIase family. Tig subfamily.

Its subcellular location is the cytoplasm. It catalyses the reaction [protein]-peptidylproline (omega=180) = [protein]-peptidylproline (omega=0). Functionally, involved in protein export. Acts as a chaperone by maintaining the newly synthesized protein in an open conformation. Functions as a peptidyl-prolyl cis-trans isomerase. The sequence is that of Trigger factor from Paracidovorax citrulli (strain AAC00-1) (Acidovorax citrulli).